Here is a 188-residue protein sequence, read N- to C-terminus: Cell division protein ZapC (188 aa).

Belongs to the ZapC family. In terms of assembly, interacts directly with FtsZ.

The protein resides in the cytoplasm. Functionally, contributes to the efficiency of the cell division process by stabilizing the polymeric form of the cell division protein FtsZ. Acts by promoting interactions between FtsZ protofilaments and suppressing the GTPase activity of FtsZ. In Psychromonas ingrahamii (strain DSM 17664 / CCUG 51855 / 37), this protein is Cell division protein ZapC.